Consider the following 382-residue polypeptide: Dual-specificity RNA methyltransferase RlmN (382 aa).

The active-site Proton acceptor is the Glu94. Residues 100–336 form the Radical SAM core domain; sequence EANRGTLCVS…NTITRKTRGD (237 aa). An intrachain disulfide couples Cys107 to Cys342. The [4Fe-4S] cluster site is built by Cys114, Cys118, and Cys121. Residues 168–169, Ser200, 222–224, and Asn299 each bind S-adenosyl-L-methionine; these read GE and SLH. Catalysis depends on Cys342, which acts as the S-methylcysteine intermediate.

Belongs to the radical SAM superfamily. RlmN family. [4Fe-4S] cluster is required as a cofactor.

It is found in the cytoplasm. It carries out the reaction adenosine(2503) in 23S rRNA + 2 reduced [2Fe-2S]-[ferredoxin] + 2 S-adenosyl-L-methionine = 2-methyladenosine(2503) in 23S rRNA + 5'-deoxyadenosine + L-methionine + 2 oxidized [2Fe-2S]-[ferredoxin] + S-adenosyl-L-homocysteine. The catalysed reaction is adenosine(37) in tRNA + 2 reduced [2Fe-2S]-[ferredoxin] + 2 S-adenosyl-L-methionine = 2-methyladenosine(37) in tRNA + 5'-deoxyadenosine + L-methionine + 2 oxidized [2Fe-2S]-[ferredoxin] + S-adenosyl-L-homocysteine. Its function is as follows. Specifically methylates position 2 of adenine 2503 in 23S rRNA and position 2 of adenine 37 in tRNAs. m2A2503 modification seems to play a crucial role in the proofreading step occurring at the peptidyl transferase center and thus would serve to optimize ribosomal fidelity. The protein is Dual-specificity RNA methyltransferase RlmN of Legionella pneumophila (strain Paris).